A 223-amino-acid polypeptide reads, in one-letter code: Small ribosomal subunit protein uS3 (223 aa).

Residues isoleucine 39–lysine 108 enclose the KH type-2 domain.

Belongs to the universal ribosomal protein uS3 family. As to quaternary structure, part of the 30S ribosomal subunit. Forms a tight complex with proteins S10 and S14.

Functionally, binds the lower part of the 30S subunit head. Binds mRNA in the 70S ribosome, positioning it for translation. The polypeptide is Small ribosomal subunit protein uS3 (Clostridium botulinum (strain Kyoto / Type A2)).